The sequence spans 369 residues: F-box protein UCC1 (369 aa).

The 38-residue stretch at 8-45 (LMDLPLEIHLSLLEYVPNELRAVNKYFYVLHNHSYKEK) folds into the F-box domain.

In terms of assembly, component of the SCF(UCC1) E3 ubiquitin-protein ligase complex composed of CDC53, SKP1, RBX1 and UCC1. Interacts with CIT2. Monoubiquitinated by UBC4.

The protein operates within protein modification; protein ubiquitination. Its function is as follows. Substrate recognition component of the SKP1-CUL1-F-box protein E3 ubiquitin-protein ligase complex SCF(UCC1) which mediates the ubiquitination and subsequent proteasomal degradation of target proteins. The SCF(UCC1) complex acts as a metabolic switch for the glyoxylate cycle and regulates the level of CIT2 protein to maintain citrate homeostasis. This Saccharomyces cerevisiae (strain ATCC 204508 / S288c) (Baker's yeast) protein is F-box protein UCC1 (UCC1).